The sequence spans 308 residues: uncharacterized protein (308 aa).

The region spanning 5-236 (LELQQLKKTY…LKSETFILDL (232 aa)) is the ABC transporter domain. Position 38 to 45 (38 to 45 (GPNGAGKS)) interacts with ATP.

It belongs to the ABC transporter superfamily.

This is an uncharacterized protein from Escherichia coli (strain K12).